Consider the following 428-residue polypeptide: Dihydroorotase (428 aa).

Residues His61 and His63 each coordinate Zn(2+). Substrate is bound by residues 63–65 (HLR) and Asn95. Asp153, His180, and His233 together coordinate Zn(2+). Asn279 is a substrate binding site. Asp306 lines the Zn(2+) pocket. Asp306 is an active-site residue. Residues His310 and 324–325 (FG) each bind substrate.

Belongs to the metallo-dependent hydrolases superfamily. DHOase family. Class I DHOase subfamily. Zn(2+) serves as cofactor.

It carries out the reaction (S)-dihydroorotate + H2O = N-carbamoyl-L-aspartate + H(+). It functions in the pathway pyrimidine metabolism; UMP biosynthesis via de novo pathway; (S)-dihydroorotate from bicarbonate: step 3/3. Catalyzes the reversible cyclization of carbamoyl aspartate to dihydroorotate. The chain is Dihydroorotase from Geobacillus thermodenitrificans (strain NG80-2).